The following is a 474-amino-acid chain: Glycogen synthase (474 aa).

Lys15 serves as a coordination point for ADP-alpha-D-glucose.

This sequence belongs to the glycosyltransferase 1 family. Bacterial/plant glycogen synthase subfamily.

The catalysed reaction is [(1-&gt;4)-alpha-D-glucosyl](n) + ADP-alpha-D-glucose = [(1-&gt;4)-alpha-D-glucosyl](n+1) + ADP + H(+). The protein operates within glycan biosynthesis; glycogen biosynthesis. Functionally, synthesizes alpha-1,4-glucan chains using ADP-glucose. The protein is Glycogen synthase of Chlamydia trachomatis serovar A (strain ATCC VR-571B / DSM 19440 / HAR-13).